The sequence spans 307 residues: sn-1-specific diacylglycerol lipase ABHD11 (307 aa).

Residues M1–S34 constitute a mitochondrion transit peptide. K79 is subject to N6-succinyllysine. The active-site Charge relay system is the S133. K196 bears the N6-succinyllysine mark. Active-site charge relay system residues include D229 and H288.

This sequence belongs to the AB hydrolase superfamily. As to quaternary structure, interacts with OGDH and DLST; this interaction maintains the functional lipoylation of the 2-oxoglutarate dehydrogenase complex. Phosphorylated. Expressed in white adipose tissues.

Its subcellular location is the mitochondrion. The protein localises to the mitochondrion matrix. The catalysed reaction is 1-octadecanoyl-2-(5Z,8Z,11Z,14Z-eicosatetraenoyl)-sn-glycerol + H2O = 2-(5Z,8Z,11Z,14Z-eicosatetraenoyl)-glycerol + octadecanoate + H(+). It carries out the reaction a 1,2-diacyl-sn-glycerol + H2O = a 2-acylglycerol + a fatty acid + H(+). The enzyme catalyses a 1,3-diacyl-sn-glycerol + H2O = a 1-acyl-sn-glycerol + a fatty acid + H(+). It catalyses the reaction 1-octadecanoyl-2-(9Z-octadecenoyl)-sn-glycerol + H2O = 2-(9Z-octadecenoyl)-glycerol + octadecanoate + H(+). The catalysed reaction is 1-octadecanoyl-2-(4Z,7Z,10Z,13Z,16Z,19Z-docosahexaenoyl)-sn-glycerol + H2O = 2-(4Z,7Z,10Z,13Z,16Z,19Z-docosahexaenoyl)-glycerol + octadecanoate + H(+). It carries out the reaction 1,2-didecanoylglycerol + H2O = decanoylglycerol + decanoate + H(+). Its function is as follows. Catalyzes the hydrolysis of diacylglycerol in vitro and may function as a key regulator in lipid metabolism, namely by regulating the intracellular levels of diacylglycerol. 1,2-diacyl-sn-glycerols are the preferred substrate over 1,3-diacyl-sn-glycerols. The enzyme hydrolyzes stearate in preference to palmitate from the sn-1 position of 1,2-diacyl-sn-glycerols. Maintains the functional lipoylation of the 2-oxoglutarate dehydrogenase complex (OGDHc) through its interaction with the OGDHc by preventing the formation of lipoyl adducts. In addition, is also required for the expansion and differentiation of embryonic stem cells (ESCs). In Mus musculus (Mouse), this protein is sn-1-specific diacylglycerol lipase ABHD11.